Here is a 221-residue protein sequence, read N- to C-terminus: uncharacterized protein (221 aa).

The signal sequence occupies residues 1–23 (MNKLIQLALFFTLMLTGCSNSST). Residues 67 to 221 (ELGKRKAKEE…QGYIDPEDAP (155 aa)) are disordered. Basic and acidic residues predominate over residues 68–150 (LGKRKAKEEA…EQKANAEKKR (83 aa)). Residues 70–161 (KRKAKEEAEK…SQAQRQQTEA (92 aa)) are a coiled coil. The span at 152–161 (SQAQRQQTEA) shows a compositional bias: polar residues. A compositionally biased stretch (low complexity) spans 162-174 (PSSNSQDPPSSSS). Residues 175–184 (QTDKTIQQPA) show a composition bias toward polar residues. A compositionally biased stretch (basic and acidic residues) spans 195–205 (YEERKKWHDDQ).

This is an uncharacterized protein from Bacillus subtilis (strain 168).